Here is a 182-residue protein sequence, read N- to C-terminus: Protein canopy homolog 2 (182 aa).

The first 20 residues, Met1 to Ala20, serve as a signal peptide directing secretion. Positions Gln24 to Leu175 constitute a Saposin B-type domain. 3 cysteine pairs are disulfide-bonded: Cys28-Cys171, Cys31-Cys164, and Cys86-Cys137. Ser115 is subject to Phosphoserine. The short motif at His179 to Leu182 is the Prevents secretion from ER element.

This sequence belongs to the canopy family. In terms of assembly, interacts with MYLIP/MIR. Expressed in different tissues. Highest levels are detected in adult placenta, liver and pancreas.

The protein resides in the endoplasmic reticulum. Functionally, positive regulator of neurite outgrowth by stabilizing myosin regulatory light chain (MRLC). It prevents MIR-mediated MRLC ubiquitination and its subsequent proteasomal degradation. This chain is Protein canopy homolog 2 (CNPY2), found in Homo sapiens (Human).